The sequence spans 384 residues: 8-amino-7-oxononanoate synthase (384 aa).

Arg-21 contacts substrate. A pyridoxal 5'-phosphate-binding site is contributed by 108–109 (GF). His-133 lines the substrate pocket. Positions 179, 207, and 233 each coordinate pyridoxal 5'-phosphate. Position 236 is an N6-(pyridoxal phosphate)lysine (Lys-236). Residue Thr-352 coordinates substrate.

The protein belongs to the class-II pyridoxal-phosphate-dependent aminotransferase family. BioF subfamily. In terms of assembly, homodimer. Pyridoxal 5'-phosphate serves as cofactor.

The enzyme catalyses 6-carboxyhexanoyl-[ACP] + L-alanine + H(+) = (8S)-8-amino-7-oxononanoate + holo-[ACP] + CO2. It participates in cofactor biosynthesis; biotin biosynthesis. In terms of biological role, catalyzes the decarboxylative condensation of pimeloyl-[acyl-carrier protein] and L-alanine to produce 8-amino-7-oxononanoate (AON), [acyl-carrier protein], and carbon dioxide. The chain is 8-amino-7-oxononanoate synthase from Shigella dysenteriae serotype 1 (strain Sd197).